Here is a 269-residue protein sequence, read N- to C-terminus: Aminoglycoside N(3)-acetyltransferase III (269 aa).

The protein belongs to the antibiotic N-acetyltransferase family.

It carries out the reaction a 2-deoxystreptamine antibiotic + acetyl-CoA = an N(3)-acetyl-2-deoxystreptamine antibiotic + CoA + H(+). In terms of biological role, resistance to antibiotics containing the 2-deoxy-streptamine ring including gentamicin, kanamycin, tobramycin, neomycin and apramycin. The chain is Aminoglycoside N(3)-acetyltransferase III (aac3-Vb) from Serratia marcescens.